A 237-amino-acid polypeptide reads, in one-letter code: Phosphoribosylaminoimidazole-succinocarboxamide synthase (237 aa).

The protein belongs to the SAICAR synthetase family.

It carries out the reaction 5-amino-1-(5-phospho-D-ribosyl)imidazole-4-carboxylate + L-aspartate + ATP = (2S)-2-[5-amino-1-(5-phospho-beta-D-ribosyl)imidazole-4-carboxamido]succinate + ADP + phosphate + 2 H(+). The protein operates within purine metabolism; IMP biosynthesis via de novo pathway; 5-amino-1-(5-phospho-D-ribosyl)imidazole-4-carboxamide from 5-amino-1-(5-phospho-D-ribosyl)imidazole-4-carboxylate: step 1/2. The protein is Phosphoribosylaminoimidazole-succinocarboxamide synthase of Idiomarina loihiensis (strain ATCC BAA-735 / DSM 15497 / L2-TR).